The chain runs to 156 residues: Transcription elongation factor GreA (156 aa).

Residues 8 to 75 adopt a coiled-coil conformation; sequence LTKEGYEKLK…ELENMLSKAE (68 aa).

The protein belongs to the GreA/GreB family.

In terms of biological role, necessary for efficient RNA polymerase transcription elongation past template-encoded arresting sites. The arresting sites in DNA have the property of trapping a certain fraction of elongating RNA polymerases that pass through, resulting in locked ternary complexes. Cleavage of the nascent transcript by cleavage factors such as GreA or GreB allows the resumption of elongation from the new 3'terminus. GreA releases sequences of 2 to 3 nucleotides. The polypeptide is Transcription elongation factor GreA (Thermosipho melanesiensis (strain DSM 12029 / CIP 104789 / BI429)).